The following is a 394-amino-acid chain: Outer membrane protein S1 (394 aa).

The first 21 residues, 1-21 (MNRKVLALLVPALLVAGAANA), serve as a signal peptide directing secretion. The tract at residues 222-242 (SSSDRSDNQVARGYGDGMNER) is disordered.

It belongs to the Gram-negative porin family. In terms of assembly, homotrimer.

It is found in the cell outer membrane. Its function is as follows. Forms pores that allow passive diffusion of small molecules across the outer membrane. This Salmonella typhi protein is Outer membrane protein S1 (ompS1).